Here is a 61-residue protein sequence, read N- to C-terminus: Small ribosomal subunit protein uS14 (61 aa).

Residues Cys24, Cys27, Cys40, and Cys43 each contribute to the Zn(2+) site.

Belongs to the universal ribosomal protein uS14 family. Zinc-binding uS14 subfamily. In terms of assembly, part of the 30S ribosomal subunit. Contacts proteins S3 and S10. It depends on Zn(2+) as a cofactor.

Functionally, binds 16S rRNA, required for the assembly of 30S particles and may also be responsible for determining the conformation of the 16S rRNA at the A site. The sequence is that of Small ribosomal subunit protein uS14 from Roseiflexus sp. (strain RS-1).